Reading from the N-terminus, the 180-residue chain is Nudix hydrolase 16, mitochondrial (180 aa).

In terms of domain architecture, Nudix hydrolase spans 18–162 (GSRLVAGCIP…WMKDALVEGF (145 aa)). Residue F60 coordinates substrate. Mn(2+)-binding residues include G63, E78, E82, and E144. Residues 63–84 (GGWENDETVREAAAREAVEEAG) carry the Nudix box motif.

The protein belongs to the Nudix hydrolase family. Requires Mg(2+) as cofactor. The cofactor is Mn(2+). Expressed in roots, leaves, stems and inflorescences.

It localises to the mitochondrion. Functionally, probably mediates the hydrolysis of some nucleoside diphosphate derivatives. This Arabidopsis thaliana (Mouse-ear cress) protein is Nudix hydrolase 16, mitochondrial (NUDT16).